Reading from the N-terminus, the 320-residue chain is ATP-dependent 6-phosphofructokinase (320 aa).

ATP-binding positions include Gly-12, 73-74 (RF), and 103-106 (GDGS). Asp-104 lines the Mg(2+) pocket. 126–128 (TID) provides a ligand contact to substrate. Asp-128 serves as the catalytic Proton acceptor. Arg-155 contacts ADP. Substrate-binding positions include Arg-163 and 170–172 (MGR). ADP-binding positions include 186 to 188 (GCE) and Lys-212. Substrate is bound by residues Glu-223, Arg-244, and 250 to 253 (HIQR).

Belongs to the phosphofructokinase type A (PFKA) family. ATP-dependent PFK group I subfamily. Prokaryotic clade 'B1' sub-subfamily. As to quaternary structure, homotetramer. Mg(2+) is required as a cofactor.

It localises to the cytoplasm. It catalyses the reaction beta-D-fructose 6-phosphate + ATP = beta-D-fructose 1,6-bisphosphate + ADP + H(+). Its pathway is carbohydrate degradation; glycolysis; D-glyceraldehyde 3-phosphate and glycerone phosphate from D-glucose: step 3/4. With respect to regulation, allosterically activated by ADP and other diphosphonucleosides, and allosterically inhibited by phosphoenolpyruvate. In terms of biological role, catalyzes the phosphorylation of D-fructose 6-phosphate to fructose 1,6-bisphosphate by ATP, the first committing step of glycolysis. In Buchnera aphidicola subsp. Cinara cedri (strain Cc), this protein is ATP-dependent 6-phosphofructokinase.